We begin with the raw amino-acid sequence, 495 residues long: Putative aldehyde dehydrogenase AldA (495 aa).

212–218 (GKGSESG) provides a ligand contact to NAD(+). Catalysis depends on residues Glu256 and Cys290.

Belongs to the aldehyde dehydrogenase family.

It carries out the reaction an aldehyde + NAD(+) + H2O = a carboxylate + NADH + 2 H(+). In Staphylococcus aureus (strain MRSA252), this protein is Putative aldehyde dehydrogenase AldA (aldA).